Consider the following 199-residue polypeptide: Holliday junction branch migration complex subunit RuvA (199 aa).

Residues 1–64 are domain I; sequence MIAFLKGAVF…ENEFKLFGFL (64 aa). The domain II stretch occupies residues 65–143; that stretch reads DQDELRLFKT…ELKLVEVEKE (79 aa). Residues 144–148 form a flexible linker region; it reads QRPLL. Residues 148-199 form a domain III region; it reads LDELMEALEILGYSRSEVLPAIMDLNRNKQLGNIVEENIKLVLKAKAQEMRR.

The protein belongs to the RuvA family. In terms of assembly, homotetramer. Forms an RuvA(8)-RuvB(12)-Holliday junction (HJ) complex. HJ DNA is sandwiched between 2 RuvA tetramers; dsDNA enters through RuvA and exits via RuvB. An RuvB hexamer assembles on each DNA strand where it exits the tetramer. Each RuvB hexamer is contacted by two RuvA subunits (via domain III) on 2 adjacent RuvB subunits; this complex drives branch migration. In the full resolvosome a probable DNA-RuvA(4)-RuvB(12)-RuvC(2) complex forms which resolves the HJ.

The protein resides in the cytoplasm. Its function is as follows. The RuvA-RuvB-RuvC complex processes Holliday junction (HJ) DNA during genetic recombination and DNA repair, while the RuvA-RuvB complex plays an important role in the rescue of blocked DNA replication forks via replication fork reversal (RFR). RuvA specifically binds to HJ cruciform DNA, conferring on it an open structure. The RuvB hexamer acts as an ATP-dependent pump, pulling dsDNA into and through the RuvAB complex. HJ branch migration allows RuvC to scan DNA until it finds its consensus sequence, where it cleaves and resolves the cruciform DNA. This is Holliday junction branch migration complex subunit RuvA from Syntrophomonas wolfei subsp. wolfei (strain DSM 2245B / Goettingen).